Reading from the N-terminus, the 63-residue chain is Large ribosomal subunit protein uL29 (63 aa).

The protein belongs to the universal ribosomal protein uL29 family.

The sequence is that of Large ribosomal subunit protein uL29 from Herminiimonas arsenicoxydans.